Reading from the N-terminus, the 494-residue chain is Guanosine-5'-triphosphate,3'-diphosphate pyrophosphatase (494 aa).

Belongs to the GppA/Ppx family. GppA subfamily.

The catalysed reaction is guanosine 3'-diphosphate 5'-triphosphate + H2O = guanosine 3',5'-bis(diphosphate) + phosphate + H(+). It participates in purine metabolism; ppGpp biosynthesis; ppGpp from GTP: step 2/2. Its function is as follows. Catalyzes the conversion of pppGpp to ppGpp. Guanosine pentaphosphate (pppGpp) is a cytoplasmic signaling molecule which together with ppGpp controls the 'stringent response', an adaptive process that allows bacteria to respond to amino acid starvation, resulting in the coordinated regulation of numerous cellular activities. This Shigella sonnei (strain Ss046) protein is Guanosine-5'-triphosphate,3'-diphosphate pyrophosphatase.